The chain runs to 871 residues: Espin (871 aa).

ANK repeat units follow at residues 1 to 31 (MALE…GPSL), 35 to 66 (LDAL…AVSR), 69 to 99 (NGAT…RVQE), 103 to 132 (SGAT…ANSA), 137 to 167 (TGAL…GVNA), 171 to 201 (NGAT…DPHL), 205 to 235 (DGMT…SFSE), 239 to 268 (DGAT…EISQ), and 271 to 300 (WGGT…GLDV). Residues S338 and S342 each carry the phosphoserine modification. 4 disordered regions span residues 349–400 (QLDS…RGIP), 416–469 (PEKS…VGLH), 493–750 (KVEL…APGV), and 819–850 (EREQ…TLGY). Polar residues predominate over residues 352 to 365 (SGMSSPNTTMSVQP). Positions 377 to 395 (FSNYDSCSSSHSSSKGQRS) are enriched in low complexity. The span at 428-465 (PSPPPPPPPPPPSFPPPPPPTGTQPPPPPPGYPAPNPP) shows a compositional bias: pro residues. Phosphoserine occurs at positions 517, 524, and 556. Positions 522-548 (QDSELLHRQELLRHSTGLRRQDSDRKQ) are enriched in basic and acidic residues. Positions 606–629 (LPPPPPPPPLPEALSSPPPAPPLP) are enriched in pro residues. Polar residues-rich tracts occupy residues 659 to 670 (KSFNMMSPTGDN) and 685 to 707 (PTPQ…SQPE). Residue S665 is modified to Phosphoserine. Positions 669–686 (DNSELLAEIKAGKSLKPT) constitute a WH2 domain. S704, S708, and S714 each carry phosphoserine. Residues 772-848 (KRQVMVRKLQ…KEQSEKLRTL (77 aa)) are a coiled coil.

In terms of assembly, monomer. Binds F-actin in a Ca(2+)-resistant fashion. Interacts (via N-terminus) with BAIAP2 (via SH3-domain). Interacts with PFN2. Interacts with MYO3A (via C-terminus). Interacts with MYO3B (via C-terminus). As to expression, expressed at high concentration in the microvillar parallel actin bundle (PAB) of hair cells stereocilia in the cochlea and vestibular system. Detected also at high levels of a number of other sensory cell types, including taste receptor cells, solitary chemoreceptor cells, vomeronasal sensory neurons and Merkel cells. Isoforms 2, 3, 4 and 5 are expressed in Purkinje cells dendritic spines. Expressed in utricle hair bundles (at protein level).

The protein resides in the cytoplasm. It localises to the cytoskeleton. Its subcellular location is the cell projection. The protein localises to the stereocilium. It is found in the microvillus. The protein resides in the cell junction. It localises to the dendritic spine. Its function is as follows. Multifunctional actin-bundling protein. Plays a major role in regulating the organization, dimension, dynamics and signaling capacities of the actin filament-rich microvilli in the mechanosensory and chemosensory cells. Required for the assembly and stabilization of the stereociliary parallel actin bundles. Plays a crucial role in the formation and maintenance of inner ear hair cell stereocilia. Involved in the elongation of actin in stereocilia. In extrastriolar hair cells, required for targeting MYO3B to stereocilia tips, and for regulation of stereocilia diameter and staircase formation. This Mus musculus (Mouse) protein is Espin (Espn).